The sequence spans 488 residues: E3 ubiquitin-protein ligase TRIM39 (488 aa).

Residues 29–70 form an RING-type zinc finger; the sequence is CSVCLEYLKEPVIIECGHNFCKACITRWWEDLERDFPCPVCR. The B box-type zinc finger occupies 102–143; the sequence is RDESLCSQHHEPLSLFCYEDQEAVCLICAISHTHRPHTVVPM. Cys107, His110, Cys129, and His135 together coordinate Zn(2+). Residues 181 to 250 adopt a coiled-coil conformation; sequence ELKRLVESRR…AHLAAEVEGK (70 aa). 2 interaction with CDKN1A regions span residues 268–307 and 359–488; these read KCEK…QLIA and TSGR…TDWE. Residues 289–484 form the B30.2/SPRY domain; sequence SNFPRQYFAL…NAAPLTIRPP (196 aa).

It belongs to the TRIM/RBCC family. Interacts with MOAP1. Interacts with CDKN1A. Autoubiquitinated.

The protein resides in the cytoplasm. It localises to the cytosol. Its subcellular location is the mitochondrion. It is found in the nucleus. The catalysed reaction is S-ubiquitinyl-[E2 ubiquitin-conjugating enzyme]-L-cysteine + [acceptor protein]-L-lysine = [E2 ubiquitin-conjugating enzyme]-L-cysteine + N(6)-ubiquitinyl-[acceptor protein]-L-lysine.. The protein operates within protein modification; protein ubiquitination. Functionally, E3 ubiquitin-protein ligase. May facilitate apoptosis by inhibiting APC/C-Cdh1-mediated poly-ubiquitination and subsequent proteasome-mediated degradation of the pro-apoptotic protein MOAP1. Regulates the G1/S transition of the cell cycle and DNA damage-induced G2 arrest by stabilizing CDKN1A/p21. Positively regulates CDKN1A/p21 stability by competing with DTL for CDKN1A/p21 binding, therefore disrupting DCX(DTL) E3 ubiquitin ligase complex-mediated CDKN1A/p21 ubiquitination and degradation. This Mus musculus (Mouse) protein is E3 ubiquitin-protein ligase TRIM39 (Trim39).